We begin with the raw amino-acid sequence, 319 residues long: Ribonuclease Z (319 aa).

Zn(2+) is bound by residues histidine 62, histidine 64, aspartate 66, histidine 67, histidine 145, aspartate 216, and histidine 274. Catalysis depends on aspartate 66, which acts as the Proton acceptor.

Belongs to the RNase Z family. In terms of assembly, homodimer. Requires Zn(2+) as cofactor.

It catalyses the reaction Endonucleolytic cleavage of RNA, removing extra 3' nucleotides from tRNA precursor, generating 3' termini of tRNAs. A 3'-hydroxy group is left at the tRNA terminus and a 5'-phosphoryl group is left at the trailer molecule.. Functionally, zinc phosphodiesterase, which displays some tRNA 3'-processing endonuclease activity. Probably involved in tRNA maturation, by removing a 3'-trailer from precursor tRNA. The chain is Ribonuclease Z from Synechococcus sp. (strain CC9902).